A 1418-amino-acid chain; its full sequence is ABC transporter G family member 38 (1418 aa).

Residues 1-27 form a disordered region; the sequence is MAHYRVSSEVENIMNRDRSHRKNEEED. The region spanning 147–419 is the ABC transporter 1 domain; the sequence is TKIRVLPDRK…FEFMGFKCPE (273 aa). Residue 179-186 coordinates ATP; the sequence is GPPGSGKS. The ABC transmembrane type-2 1 domain occupies 497 to 710; it reads ELLKACLERE…IQTAVSVNEF (214 aa). The next 6 membrane-spanning stretches (helical) occupy residues 516 to 536, 548 to 568, 600 to 620, 634 to 654, 659 to 679, and 729 to 749; these read TFVLKSLQLIINAILIGVVFW, GIIYMGAIYLEVQMIVFSGFF, IITFPLSFVEVFIVVLITYFT, YLVLALCGQMSYGLFRCIAAV, VVSNTMGCLAVMWLMTFSGYV, and FFVETYWYWIGLLALILSTIL. The 253-residue stretch at 821–1073 folds into the ABC transporter 2 domain; that stretch reads MTFENITYSV…QLIEYFEGIR (253 aa). Residue 866–873 participates in ATP binding; that stretch reads GVSGAGKT. One can recognise an ABC transmembrane type-2 2 domain in the interval 1146–1360; it reads SQFQACLWKQ…GLYGLTIAQY (215 aa). The next 7 membrane-spanning stretches (helical) occupy residues 1167 to 1187, 1197 to 1217, 1249 to 1269, 1284 to 1304, 1310 to 1330, 1341 to 1361, and 1387 to 1407; these read AVRFSFGAAVGIMYGIIFWSL, IFNSVGAMSTVVGFLSSQSAA, VIIEIPYTMAQACIYGVIVYG, IFFTFISILYSIYTGIMVISV, IASILNGVISTSWNVFSGFTI, WFTYVCPGWWGLYGLTIAQYG, and FLWVVSLTLIAFSMFFVFIYA.

The protein belongs to the ABC transporter superfamily. ABCG family. PDR (TC 3.A.1.205) subfamily. In terms of tissue distribution, expressed in roots and siliques at low levels.

The protein localises to the membrane. May be a general defense protein. This chain is ABC transporter G family member 38 (ABCG38), found in Arabidopsis thaliana (Mouse-ear cress).